The primary structure comprises 334 residues: Phospho-N-acetylmuramoyl-pentapeptide-transferase (334 aa).

A run of 9 helical transmembrane segments spans residues 5–25 (VVWL…PVTI), 52–72 (PTMG…VLLV), 81–101 (GLVV…DDFI), 116–136 (KILG…FKLG), 148–168 (GISF…VLLG), 181–200 (GLAS…LALV), 230–250 (VFMG…GAVV), 256–276 (LLVV…IQVI), and 309–329 (FWLL…DFWL).

This sequence belongs to the glycosyltransferase 4 family. MraY subfamily. Mg(2+) is required as a cofactor.

The protein localises to the cell membrane. It carries out the reaction UDP-N-acetyl-alpha-D-muramoyl-L-alanyl-gamma-D-glutamyl-meso-2,6-diaminopimeloyl-D-alanyl-D-alanine + di-trans,octa-cis-undecaprenyl phosphate = di-trans,octa-cis-undecaprenyl diphospho-N-acetyl-alpha-D-muramoyl-L-alanyl-D-glutamyl-meso-2,6-diaminopimeloyl-D-alanyl-D-alanine + UMP. It functions in the pathway cell wall biogenesis; peptidoglycan biosynthesis. Its function is as follows. Catalyzes the initial step of the lipid cycle reactions in the biosynthesis of the cell wall peptidoglycan: transfers peptidoglycan precursor phospho-MurNAc-pentapeptide from UDP-MurNAc-pentapeptide onto the lipid carrier undecaprenyl phosphate, yielding undecaprenyl-pyrophosphoryl-MurNAc-pentapeptide, known as lipid I. This chain is Phospho-N-acetylmuramoyl-pentapeptide-transferase, found in Desulforamulus reducens (strain ATCC BAA-1160 / DSM 100696 / MI-1) (Desulfotomaculum reducens).